Reading from the N-terminus, the 1446-residue chain is Centrosomal protein of 164 kDa (1446 aa).

Residues 1 to 195 are interaction with ATRIP; sequence MARRPILLGD…PPQGLKAAAC (195 aa). Residues 56–89 form the WW domain; it reads APLPKGWKPCQNITGDLYYFNFDTGQSIWDHPCD. Disordered stretches follow at residues 106-132 and 159-185; these read PGAI…SKSP and PPSA…EPTL. Residues 109–121 are compositionally biased toward basic residues; it reads IKKKDKKKKKEKK. The span at 164–176 shows a compositional bias: polar residues; that stretch reads RGSQSVSLGSSAD. Ser202 bears the Phosphoserine mark. 4 disordered regions span residues 217–238, 250–408, 424–570, and 830–849; these read EETN…SSEL, GGNF…SFLG, GDTL…EPAA, and KRQE…KEEH. A compositionally biased stretch (acidic residues) spans 218-228; it reads ETNEEDEEESD. Positions 257–277 are enriched in basic and acidic residues; it reads ESPRTSQPDKKDVSLDSDADR. Polar residues predominate over residues 288-312; that stretch reads GADSSVASANGSKSQGRGASPWNPQ. 2 stretches are compositionally biased toward basic and acidic residues: residues 355-372 and 384-397; these read KEGE…KEAS and SEIH…RHSG. Residues 451 to 461 show a composition bias toward polar residues; the sequence is SSIAEPQSKHT. Composition is skewed to basic and acidic residues over residues 490 to 499 and 525 to 534; these read PEWKEAEGPG and ERAEEKHSQA. The stretch at 1143–1197 forms a coiled coil; that stretch reads EVLGNMRKNLNEETRHLDEMKSAMRKGHDLLKKKEEKLIQLESSLQEEVSDEDTL. The interval 1261–1287 is disordered; it reads LGSLNSQPPPQGLGSQPPPPLFTSSLR. Positions 1267–1281 are enriched in pro residues; that stretch reads QPPPQGLGSQPPPPL. 2 positions are modified to phosphoserine: Ser1369 and Ser1371.

In terms of assembly, interacts (via N-terminus) with ATRIP. Interacts with ATM, ATR and MDC1. Interacts with XPA (via N-terminus) upon UV irradiation. Interacts with CEP83, CCDC92, TTBK2, DVL3, NPHP3 and weakly with NPHP4. Interacts with DZIP1.

It localises to the cytoplasm. The protein localises to the cytoskeleton. Its subcellular location is the microtubule organizing center. It is found in the centrosome. The protein resides in the centriole. It localises to the nucleus. Plays a role in microtubule organization and/or maintenance for the formation of primary cilia (PC), a microtubule-based structure that protrudes from the surface of epithelial cells. Plays a critical role in G2/M checkpoint and nuclear divisions. A key player in the DNA damage-activated ATR/ATM signaling cascade since it is required for the proper phosphorylation of H2AX, RPA, CHEK2 and CHEK1. Plays a critical role in chromosome segregation, acting as a mediator required for the maintenance of genomic stability through modulation of MDC1, RPA and CHEK1. The sequence is that of Centrosomal protein of 164 kDa from Mus musculus (Mouse).